The following is a 171-amino-acid chain: ATP synthase subunit b 2 (171 aa).

A helical transmembrane segment spans residues 9–29; sequence APWHHPVFWVAVAFVLFFVLF.

This sequence belongs to the ATPase B chain family. In terms of assembly, F-type ATPases have 2 components, F(1) - the catalytic core - and F(0) - the membrane proton channel. F(1) has five subunits: alpha(3), beta(3), gamma(1), delta(1), epsilon(1). F(0) has three main subunits: a(1), b(2) and c(10-14). The alpha and beta chains form an alternating ring which encloses part of the gamma chain. F(1) is attached to F(0) by a central stalk formed by the gamma and epsilon chains, while a peripheral stalk is formed by the delta and b chains.

The protein localises to the cell inner membrane. F(1)F(0) ATP synthase produces ATP from ADP in the presence of a proton or sodium gradient. F-type ATPases consist of two structural domains, F(1) containing the extramembraneous catalytic core and F(0) containing the membrane proton channel, linked together by a central stalk and a peripheral stalk. During catalysis, ATP synthesis in the catalytic domain of F(1) is coupled via a rotary mechanism of the central stalk subunits to proton translocation. Functionally, component of the F(0) channel, it forms part of the peripheral stalk, linking F(1) to F(0). The sequence is that of ATP synthase subunit b 2 from Granulibacter bethesdensis (strain ATCC BAA-1260 / CGDNIH1).